Reading from the N-terminus, the 72-residue chain is Crustacean hyperglycemic hormone B (72 aa).

Position 1 is a pyrrolidone carboxylic acid (Gln-1). Phe-3 bears the D-phenylalanine; in form CHHB-II mark. Cystine bridges form between Cys-7–Cys-43, Cys-23–Cys-39, and Cys-26–Cys-52. Val-72 carries the post-translational modification Valine amide.

In terms of processing, stereoinversion of L-Phe (in CHHB-I) to D-Phe (in CHHB-II).

It localises to the secreted. Functionally, hormone found in the sinus gland of isopods and decapods which controls the blood sugar level. Has a secretagogue action over the amylase released from the midgut gland. May act as a stress hormone and may be involved in the control of molting and reproduction. The sequence is that of Crustacean hyperglycemic hormone B from Cherax destructor (Common yabby crayfish).